The primary structure comprises 207 residues: SPRY domain-containing protein 4 (207 aa).

Residues 12-207 (YRWGTKRWGV…HSGLEVPKGL (196 aa)) enclose the B30.2/SPRY domain. Residues K53 and K130 each carry the N6-acetyllysine modification. At K139 the chain carries N6-succinyllysine.

This is SPRY domain-containing protein 4 (Spryd4) from Mus musculus (Mouse).